Reading from the N-terminus, the 311-residue chain is Homoserine O-acetyltransferase (311 aa).

The active-site Acyl-thioester intermediate is Cys-142. Residues Lys-163 and Ser-192 each contribute to the substrate site. Residue His-235 is the Proton acceptor of the active site. The active site involves Glu-237. Position 249 (Arg-249) interacts with substrate.

Belongs to the MetA family.

The protein resides in the cytoplasm. The enzyme catalyses L-homoserine + acetyl-CoA = O-acetyl-L-homoserine + CoA. It functions in the pathway amino-acid biosynthesis; L-methionine biosynthesis via de novo pathway; O-acetyl-L-homoserine from L-homoserine: step 1/1. Its function is as follows. Transfers an acetyl group from acetyl-CoA to L-homoserine, forming acetyl-L-homoserine. This chain is Homoserine O-acetyltransferase, found in Lysinibacillus sphaericus (strain C3-41).